The primary structure comprises 240 residues: Coiled-coil domain-containing protein 152 (240 aa).

A coiled-coil region spans residues 55 to 223 (MQTKEVAMKQ…LEQRLSVSKD (169 aa)).

In Bos taurus (Bovine), this protein is Coiled-coil domain-containing protein 152 (CCDC152).